The sequence spans 172 residues: MDHLKKYITEINDYPKKGIVFKDLNPIYKEPKAWKELMFPLQNLISTKKPDYIAGIESRGFISASALAFKLEIGLITIRKPNKLPGEVIGTNYKLEYGEDRLEIQQNIIEKDSKILLFDDLLATGGTAGAAGKLIKKAGGNLIGYAFLVELTELKGRENLDSNLLVETLIKY.

The protein belongs to the purine/pyrimidine phosphoribosyltransferase family. As to quaternary structure, homodimer.

Its subcellular location is the cytoplasm. It carries out the reaction AMP + diphosphate = 5-phospho-alpha-D-ribose 1-diphosphate + adenine. Its pathway is purine metabolism; AMP biosynthesis via salvage pathway; AMP from adenine: step 1/1. Its function is as follows. Catalyzes a salvage reaction resulting in the formation of AMP, that is energically less costly than de novo synthesis. This Prochlorococcus marinus (strain NATL1A) protein is Adenine phosphoribosyltransferase.